Reading from the N-terminus, the 165-residue chain is Lipoprotein signal peptidase (165 aa).

Transmembrane regions (helical) follow at residues 9 to 29 (SFLWLSAVTFLLDLSSKYFVV), 65 to 85 (WQKYFFIVLAIAISLMLCYFL), and 100 to 120 (ALIIGGALGNMIDRLYHGFVV). Catalysis depends on residues Asp121 and Asp139. Residues 134–154 (VFNVADIAISLGAGLMILDAF) traverse the membrane as a helical segment.

Belongs to the peptidase A8 family.

The protein resides in the cell inner membrane. It carries out the reaction Release of signal peptides from bacterial membrane prolipoproteins. Hydrolyzes -Xaa-Yaa-Zaa-|-(S,diacylglyceryl)Cys-, in which Xaa is hydrophobic (preferably Leu), and Yaa (Ala or Ser) and Zaa (Gly or Ala) have small, neutral side chains.. It functions in the pathway protein modification; lipoprotein biosynthesis (signal peptide cleavage). In terms of biological role, this protein specifically catalyzes the removal of signal peptides from prolipoproteins. This chain is Lipoprotein signal peptidase, found in Pasteurella multocida (strain Pm70).